We begin with the raw amino-acid sequence, 122 residues long: Flagellar protein FliT (122 aa).

A required for homodimerization region spans residues 1 to 50; sequence MTSTVEFINRWQRIALLSQSLLELAQRGEWDLLLQQEVSYLQSIETVMEK. The segment at 60 to 98 is fliD binding; it reads IQDMVAGYIKQTLDNEQLLKGLLQQRLDELSSLIGQSTR.

It belongs to the FliT family. In terms of assembly, homodimer. Interacts with FliD and FlhC.

It localises to the cytoplasm. Its subcellular location is the cytosol. Functionally, dual-function protein that regulates the transcription of class 2 flagellar operons and that also acts as an export chaperone for the filament-capping protein FliD. As a transcriptional regulator, acts as an anti-FlhDC factor; it directly binds FlhC, thus inhibiting the binding of the FlhC/FlhD complex to class 2 promoters, resulting in decreased expression of class 2 flagellar operons. As a chaperone, effects FliD transition to the membrane by preventing its premature polymerization, and by directing it to the export apparatus. This chain is Flagellar protein FliT, found in Salmonella schwarzengrund (strain CVM19633).